The sequence spans 1894 residues: MPLPPLSSRTLLLLLLLLLRGVWIAISSPPAGLGPQPAFRTFVASDWGLTHLVVHEQTGEVYVGAVNRIYKLSGNLTLLRAHVTGPVEDNEKCYPPPSVQSCPHGLGSTDNVNKLLLLDYAANRLLACGSASQGICQFLRLDDLFKLGEPHHRKEHYLSSVREAGSMAGVLIAGPPGQGQAKLFVGTPIDGKSEYFPTLSSRRLMANEEDADMFGFVYQDEFVSSQLKIPSDTLSKFPAFDIYYVYSFRSEQFVYYLTLQLDTQLTSPDAAGEHFFTSKIVRLCVNDPKFYSYVEFPIGCEQAGVEYRLVQDAYLSRPGQALAKQLGLAEDEEVLFTVFAQGQKNRVKPPKESALCLFTLRAIKEKIKERIQSCYRGEGKLSLPWLLNKELGCINSPLQIDDDFCGQDFNQPLGGTVTIEGTPLFVDKEDGLTAVAAYDYQGRTVVFAGTRSGRIRKILVDLANPSGRPALAYESVVAQEGNPILRDLVLSPNRQYLYAMTEKQVTQVPVESCVQYTSCELCLGSRDPHCGWCVLHSICSRQDACERAEEPQRFASDLLQCVQLTVQPRNVSVTMSQVPLVLQAWNVPDLSAGVNCSFEDFTETESILEDGRIHCHSPSAREVAPITQGQGDQRVVKLYLKSKETGKKFASVDFVFYNCSVHQSCLACVNGSFPCHWCKYRHVCTNNAADCAFLEGRVNMSEDCPQILPSTHIYVPVGVVKPITLAARNLPQPQSGQRGYECLFHIPGSPARVTALRFNSSSLQCQNSSYSYEGNDVSDLPVNLSVVWNGNFVIDNPQNIQAHLYKCPALRQSCGLCLKADPRFECGWCVAERRCSLRHHCPADSPASWMHAHHGSSRCTDPKILKLSPETGPRQGGTRLTITGENLGLRFEDVRLGVHVGKVLCSPVESEYISAEQIVCEIGDASTLRAHDALVEVCVRDCSLHYRALSPKRFTFVTPTFYRVSPSRGPLSGGTWIGIEGSHLNAGSDVAVSIGGRPCSFSWRNSREIRCLTPPGHTPGSAPIVININRAQLSNPEVKYNYTEDPTILRIDPEWSINSGGTLLTVTGTNLATVREPRIRAKYGGIERENSCMVYNDTTMVCRAPSIDNPKRSPPELGERPDEIGFIMDNVRTLLVLNSSSFLYYPDPVLEPLSPTGLLELKPSSPLILKGRNLLPPAPGNSRLNYTVLIGSTPCILTVSETQLLCEAPNLTGQHKVTVRAGGFEFSPGMLQVYSDSLLTLPAIVGIGGGGGLLLLVIVAVLIAYKRKSRDADRTLKRLQLQMDNLESRVALECKEAFAELQTDIHELTSDLDGAGIPFLDYRTYAMRVLFPGIEDHPVLKEMEVQANVEKSLTLFGQLLTKKHFLLTFIRTLEAQRSFSMRDRGNVASLIMTALQGEMEYATGVLKQLLSDLIEKNLESKNHPKLLLRRTESVAEKMLTNWFTFLLYKFLKECAGEPLFMLYCAIKQQMEKGPIDAITGEARYSLSEDKLIRQQIDYKTLTLNCVNPEHENAPEVPVKGLNCDTVTQVKEKLLDAVYKGVPYSQRPKAGDMDLEWRQGRMARIILQDEDVTTKIDNDWKRLNTLAHYQVTDGSSVALVPKQTSAYNISNSSTFTKSLSRYESMLRTASSPDSLRSRTPMITPDLESGTKLWHLVKNHDHLDQREGDRGSKMVSEIYLTRLLATKGTLQKFVDDLFETIFSTAHRGSALPLAIKYMFDFLDEQADKHQIHDSDVRHTWKSNCLPLRFWVNVIKNPQFVFDIHKNSITDACLSVVAQTFMDSCSTSEHKLGKDSPSNKLLYAKDIPNYKSWVERYYADIAKMPAISDQDMSAYLAEQSRLHLSQFNSMSALHEIYSYIAKYKDEILVALEKDEQARRQRLRSKLEQVVDTMALSS.

The first 27 residues, 1–27 (MPLPPLSSRTLLLLLLLLLRGVWIAIS), serve as a signal peptide directing secretion. The region spanning 28–510 (SPPAGLGPQP…TEKQVTQVPV (483 aa)) is the Sema domain. The Extracellular portion of the chain corresponds to 28 to 1242 (SPPAGLGPQP…VYSDSLLTLP (1215 aa)). Asn-75 carries an N-linked (GlcNAc...) asparagine glycan. Intrachain disulfides connect Cys-93–Cys-102, Cys-128–Cys-136, Cys-284–Cys-405, Cys-300–Cys-356, Cys-374–Cys-393, Cys-513–Cys-530, Cys-519–Cys-561, Cys-522–Cys-539, Cys-533–Cys-545, and Cys-596–Cys-615. N-linked (GlcNAc...) asparagine glycosylation is found at Asn-658, Asn-670, and Asn-699. IPT/TIG domains lie at 862–957 (PKIL…FTFV), 959–1043 (PTFY…YNYT), 1046–1145 (PTIL…FLYY), and 1148–1234 (PVLE…LQVY). A glycan (N-linked (GlcNAc...) asparagine) is linked at Asn-1041. N-linked (GlcNAc...) asparagine glycans are attached at residues Asn-1185 and Asn-1210. Residues 1243 to 1263 (AIVGIGGGGGLLLLVIVAVLI) traverse the membrane as a helical segment. A coiled-coil region spans residues 1262–1315 (LIAYKRKSRDADRTLKRLQLQMDNLESRVALECKEAFAELQTDIHELTSDLDGA). At 1264–1894 (AYKRKSRDAD…QVVDTMALSS (631 aa)) the chain is on the cytoplasmic side.

The protein belongs to the plexin family. Interacts directly with NRP1 and NRP2. Interacts with PLXN1B. Interacts with FARP2, RND1 and KDR/VEGFR2. Binding of SEMA3A leads to dissociation of FARP2. Interacts with CRMP1, DPYSL2/CRMP2, DPYSL3/CRMP3 and DPYSL4/CRMP4. Interacts (via TIG domains) with TREM2; the interaction mediates SEMA6D binding and signaling through TYROBP. Ubiquitous.

The protein localises to the cell membrane. Its function is as follows. Coreceptor for SEMA3A, SEMA3C, SEMA3F and SEMA6D. Necessary for signaling by class 3 semaphorins and subsequent remodeling of the cytoskeleton. Plays a role in axon guidance, invasive growth and cell migration. Class 3 semaphorins bind to a complex composed of a neuropilin and a plexin. The plexin modulates the affinity of the complex for specific semaphorins, and its cytoplasmic domain is required for the activation of down-stream signaling events in the cytoplasm. Acts as coreceptor of TREM2 for SEMA6D in dendritic cells and is involved in the generation of immune responses and skeletal homeostasis. The sequence is that of Plexin-A1 (Plxna1) from Mus musculus (Mouse).